A 511-amino-acid polypeptide reads, in one-letter code: TNF receptor-associated factor family protein DDB_G0290931 (511 aa).

Residues 27-67 form an RING-type; degenerate zinc finger; it reads CPICFELIYKKSIYQCSSGHYACQECWEKSLEIKQECMICR. The stretch at 103-169 forms a coiled coil; it reads IDGANQENED…RKLIKDEENG (67 aa). The interval 107 to 159 is disordered; that stretch reads NQENEDEENEDEENEDDEDENEDEENGEDDEDKDEDEENENENEENKDEENEK. A compositionally biased stretch (acidic residues) spans 109-155; the sequence is ENEDEENEDEENEDDEDENEDEENGEDDEDKDEDEENENENEENKDE. 2 TRAF-type zinc fingers span residues 181–234 and 236–293; these read RHIQ…QVQL and NHYD…SELQ. A coiled-coil region spans residues 324 to 358; sequence ELLLKEIEKSKITCSELQRKNDELSSLITEIDDNY. In terms of domain architecture, MATH spans 374–499; the sequence is GYTNKWIISN…DDKLTINIYV (126 aa).

The protein belongs to the TNF receptor-associated factor family. A subfamily.

Its subcellular location is the cytoplasm. In terms of biological role, probable adapter protein and signal transducer that links members of the tumor necrosis factor receptor family to different signaling pathways by association with the receptor cytoplasmic domain and kinases. The protein is TNF receptor-associated factor family protein DDB_G0290931 of Dictyostelium discoideum (Social amoeba).